The primary structure comprises 1096 residues: DNA-directed RNA polymerase subunit beta (1096 aa).

The tract at residues 1070–1096 is disordered; that stretch reads LMQDVNPRRSTPSRPTYESLGSDYQED.

The protein belongs to the RNA polymerase beta chain family. In terms of assembly, in cyanobacteria the RNAP catalytic core is composed of 2 alpha, 1 beta, 1 beta', 1 gamma and 1 omega subunit. When a sigma factor is associated with the core the holoenzyme is formed, which can initiate transcription.

It catalyses the reaction RNA(n) + a ribonucleoside 5'-triphosphate = RNA(n+1) + diphosphate. Its function is as follows. DNA-dependent RNA polymerase catalyzes the transcription of DNA into RNA using the four ribonucleoside triphosphates as substrates. The chain is DNA-directed RNA polymerase subunit beta from Prochlorococcus marinus (strain MIT 9211).